Reading from the N-terminus, the 1235-residue chain is DNA polymerase catalytic subunit (1235 aa).

Disordered regions lie at residues 640-692 and 1098-1134; these read QGRF…TAGR and AAAP…ASKP. Over residues 650 to 661 the composition is skewed to basic and acidic residues; sequence APKRPAAAREDE. Residues 662-675 show a composition bias toward acidic residues; sequence ERPEEEGEDEDERE. The segment covering 676–691 has biased composition (basic and acidic residues); the sequence is EGGGEREPEGARETAG.

Belongs to the DNA polymerase type-B family. As to quaternary structure, forms a complex with the ssDNA-binding protein UL29, the DNA polymerase processivity factor, and the alkaline exonuclease. Interacts with the putative helicase-primase complex subunit UL8; this interaction may coordinate leading and lagging strand DNA synthesis at the replication fork.

The protein resides in the host nucleus. The catalysed reaction is DNA(n) + a 2'-deoxyribonucleoside 5'-triphosphate = DNA(n+1) + diphosphate. It catalyses the reaction Endonucleolytic cleavage to 5'-phosphomonoester.. In terms of biological role, replicates viral genomic DNA. The replication complex is composed of six viral proteins: the DNA polymerase, processivity factor, primase, primase-associated factor, helicase, and ssDNA-binding protein. Additionally, the polymerase contains an intrinsic ribonuclease H (RNase H) activity that specifically degrades RNA/DNA heteroduplexes or duplex DNA substrates in the 5' to 3' direction. Therefore, it can catalyze the excision of the RNA primers that initiate the synthesis of Okazaki fragments at a replication fork during viral DNA replication. The sequence is that of DNA polymerase catalytic subunit from Homo sapiens (Human).